The chain runs to 126 residues: Glycine cleavage system H protein (126 aa).

One can recognise a Lipoyl-binding domain in the interval 22-104; that stretch reads VATIGITEYA…YEKAWMVKVE (83 aa). An N6-lipoyllysine modification is found at lysine 63.

Belongs to the GcvH family. As to quaternary structure, the glycine cleavage system is composed of four proteins: P, T, L and H. (R)-lipoate is required as a cofactor.

Its function is as follows. The glycine cleavage system catalyzes the degradation of glycine. The H protein shuttles the methylamine group of glycine from the P protein to the T protein. Functionally, is also involved in protein lipoylation via its role as an octanoyl/lipoyl carrier protein intermediate. The protein is Glycine cleavage system H protein of Staphylococcus aureus (strain MSSA476).